The following is a 437-amino-acid chain: Adenylosuccinate synthetase (437 aa).

GTP contacts are provided by residues Gly-12 to Lys-18 and Gly-40 to Thr-42. The active-site Proton acceptor is Asp-13. Mg(2+) contacts are provided by Asp-13 and Gly-40. Residues Asp-13–Lys-16, Asn-38–His-41, Thr-128, Arg-142, Gln-223, Thr-238, and Arg-302 each bind IMP. The active-site Proton donor is His-41. Thr-298–Arg-304 contributes to the substrate binding site. GTP is bound by residues Arg-304, Lys-330–Asp-332, and Ser-412–Gly-414.

Belongs to the adenylosuccinate synthetase family. As to quaternary structure, homodimer. The cofactor is Mg(2+).

The protein localises to the cytoplasm. The enzyme catalyses IMP + L-aspartate + GTP = N(6)-(1,2-dicarboxyethyl)-AMP + GDP + phosphate + 2 H(+). Its pathway is purine metabolism; AMP biosynthesis via de novo pathway; AMP from IMP: step 1/2. Plays an important role in the de novo pathway of purine nucleotide biosynthesis. Catalyzes the first committed step in the biosynthesis of AMP from IMP. This is Adenylosuccinate synthetase from Prochlorococcus marinus (strain MIT 9313).